Reading from the N-terminus, the 220-residue chain is Deoxyribose-phosphate aldolase (220 aa).

Asp89 serves as the catalytic Proton donor/acceptor. Lys151 acts as the Schiff-base intermediate with acetaldehyde in catalysis. The active-site Proton donor/acceptor is Lys180.

This sequence belongs to the DeoC/FbaB aldolase family. DeoC type 1 subfamily.

Its subcellular location is the cytoplasm. It carries out the reaction 2-deoxy-D-ribose 5-phosphate = D-glyceraldehyde 3-phosphate + acetaldehyde. Its pathway is carbohydrate degradation; 2-deoxy-D-ribose 1-phosphate degradation; D-glyceraldehyde 3-phosphate and acetaldehyde from 2-deoxy-alpha-D-ribose 1-phosphate: step 2/2. In terms of biological role, catalyzes a reversible aldol reaction between acetaldehyde and D-glyceraldehyde 3-phosphate to generate 2-deoxy-D-ribose 5-phosphate. The protein is Deoxyribose-phosphate aldolase of Lactococcus lactis subsp. cremoris (strain SK11).